The chain runs to 399 residues: MESKSHAHCFRAQRVLHGKQWQQDAVVTVDENGTISAIESYDGQRHADAIPLGPVDLMPGLIDSHVHGSQGCDVMDATHDSLNTMSRYFATLGVTAFVATTVTAPVAKIRAALAQVAKSKHDGVDGAEILGAYLEGPYFTEKNKGAHPTQWFRELAVEELEDWISYSDNQLLKVALAPEKTGALDAIRYLDAHGIHVMLGHSDADYEQVKAALAAGAKGIVHCYNGMRGLHHRDPGVVGAGLLHPHCFVEMIADGHHVHPAAIDVAHRCCGSRMTLITDAMRATGMPDGQYTLGEYQVDMKQGVVMTSSGGLAGSTLTLLRGVKNIHRWLNVPIEQAWLMASYTPAESLGIQHQLGSLEVGKYASMVAVSSDFSIEKTWVKGRLVFDAATSPRQEALCI.

Residues His-65, His-67, and Glu-135 each coordinate a divalent metal cation. 146–147 contacts substrate; that stretch reads AH. His-201 and His-222 together coordinate a divalent metal cation. Substrate contacts are provided by residues 225 to 226, Arg-233, and 254 to 257; these read NG and DGHH. A divalent metal cation is bound at residue Asp-279. Asp-279 functions as the Proton donor/acceptor in the catalytic mechanism. 312–314 lines the substrate pocket; sequence LAG.

This sequence belongs to the metallo-dependent hydrolases superfamily. NagA family. As to quaternary structure, homodimer. Requires a divalent metal cation as cofactor.

It catalyses the reaction N-acetyl-D-glucosamine 6-phosphate + H2O = D-glucosamine 6-phosphate + acetate. It functions in the pathway amino-sugar metabolism; N-acetylneuraminate degradation; D-fructose 6-phosphate from N-acetylneuraminate: step 4/5. In terms of biological role, involved in the first committed step in the biosynthesis of amino-sugar-nucleotides. Catalyzes the hydrolysis of the N-acetyl group of N-acetylglucosamine-6-phosphate (GlcNAc-6-P) to yield glucosamine 6-phosphate and acetate. The sequence is that of N-acetylglucosamine-6-phosphate deacetylase (manD) from Vibrio furnissii.